The sequence spans 373 residues: Transaldolase (373 aa).

The active-site Schiff-base intermediate with substrate is the lysine 143.

Belongs to the transaldolase family. Type 2 subfamily.

It is found in the cytoplasm. The enzyme catalyses D-sedoheptulose 7-phosphate + D-glyceraldehyde 3-phosphate = D-erythrose 4-phosphate + beta-D-fructose 6-phosphate. It participates in carbohydrate degradation; pentose phosphate pathway; D-glyceraldehyde 3-phosphate and beta-D-fructose 6-phosphate from D-ribose 5-phosphate and D-xylulose 5-phosphate (non-oxidative stage): step 2/3. Transaldolase is important for the balance of metabolites in the pentose-phosphate pathway. This chain is Transaldolase, found in Mycobacterium marinum (strain ATCC BAA-535 / M).